Consider the following 135-residue polypeptide: M-zodatoxin-Lt8q (135 aa).

Residues 1-20 (MKYFVVALALVAAFACIAES) form the signal peptide. The propeptide occupies 21–60 (KPAESEHELAEVEEENELADLEDAVWLEHLADLSDLEEAR).

It belongs to the cationic peptide 06 (cytoinsectotoxin) family. Expressed by the venom gland.

It is found in the secreted. Its function is as follows. Insecticidal, cytolytic and antimicrobial peptide. Forms voltage-dependent, ion-permeable channels in membranes. At high concentration causes cell membrane lysis. The sequence is that of M-zodatoxin-Lt8q (cit 1-16) from Lachesana tarabaevi (Spider).